A 230-amino-acid chain; its full sequence is Protein CWC15 homolog B (230 aa).

The tract at residues Met-1–Ala-126 is disordered. A compositionally biased stretch (polar residues) spans Asp-22 to Asp-34. The segment covering Glu-52–Thr-84 has biased composition (basic and acidic residues). The segment covering Asp-102 to Thr-124 has biased composition (acidic residues). A coiled-coil region spans residues Asp-121 to Asn-165.

This sequence belongs to the CWC15 family. In terms of assembly, identified in the spliceosome C complex. Component of the minor spliceosome, which splices U12-type introns.

It is found in the nucleus. In terms of biological role, involved in pre-mRNA splicing as component of the spliceosome. This Xenopus laevis (African clawed frog) protein is Protein CWC15 homolog B (cwc15-b).